A 169-amino-acid polypeptide reads, in one-letter code: Large ribosomal subunit protein uL10 (169 aa).

The protein belongs to the universal ribosomal protein uL10 family. In terms of assembly, part of the ribosomal stalk of the 50S ribosomal subunit. The N-terminus interacts with L11 and the large rRNA to form the base of the stalk. The C-terminus forms an elongated spine to which L12 dimers bind in a sequential fashion forming a multimeric L10(L12)X complex.

In terms of biological role, forms part of the ribosomal stalk, playing a central role in the interaction of the ribosome with GTP-bound translation factors. In Deinococcus geothermalis (strain DSM 11300 / CIP 105573 / AG-3a), this protein is Large ribosomal subunit protein uL10.